Here is a 352-residue protein sequence, read N- to C-terminus: Photosystem II D2 protein (352 aa).

Thr2 is modified (N-acetylthreonine). Thr2 is modified (phosphothreonine). Residues 40-60 (TAYLALGGWLTGTTFVTSWYT) form a helical membrane-spanning segment. A chlorophyll a-binding site is contributed by His117. A helical transmembrane segment spans residues 124–140 (GFMLRQFEIARSVKLRP). Gln129 and Asn142 together coordinate pheophytin a. Residues 152 to 165 (VFVSVFLIYPLGQS) traverse the membrane as a helical segment. Residue His197 participates in chlorophyll a binding. A helical membrane pass occupies residues 207–227 (AALLCAIHGATVENTLFEDGD). The a plastoquinone site is built by His214 and Phe261. Fe cation is bound at residue His214. A Fe cation-binding site is contributed by His268. Residues 278–294 (GLWMSALGVVGLALNLR) traverse the membrane as a helical segment.

The protein belongs to the reaction center PufL/M/PsbA/D family. PSII is composed of 1 copy each of membrane proteins PsbA, PsbB, PsbC, PsbD, PsbE, PsbF, PsbH, PsbI, PsbJ, PsbK, PsbL, PsbM, PsbT, PsbX, PsbY, PsbZ, Psb30/Ycf12, at least 3 peripheral proteins of the oxygen-evolving complex and a large number of cofactors. It forms dimeric complexes. The cofactor is The D1/D2 heterodimer binds P680, chlorophylls that are the primary electron donor of PSII, and subsequent electron acceptors. It shares a non-heme iron and each subunit binds pheophytin, quinone, additional chlorophylls, carotenoids and lipids. There is also a Cl(-1) ion associated with D1 and D2, which is required for oxygen evolution. The PSII complex binds additional chlorophylls, carotenoids and specific lipids..

Its subcellular location is the plastid. The protein localises to the chloroplast thylakoid membrane. The enzyme catalyses 2 a plastoquinone + 4 hnu + 2 H2O = 2 a plastoquinol + O2. Functionally, photosystem II (PSII) is a light-driven water:plastoquinone oxidoreductase that uses light energy to abstract electrons from H(2)O, generating O(2) and a proton gradient subsequently used for ATP formation. It consists of a core antenna complex that captures photons, and an electron transfer chain that converts photonic excitation into a charge separation. The D1/D2 (PsbA/PsbD) reaction center heterodimer binds P680, the primary electron donor of PSII as well as several subsequent electron acceptors. D2 is needed for assembly of a stable PSII complex. The sequence is that of Photosystem II D2 protein from Pleurastrum terricola (Filamentous green alga).